Here is a 285-residue protein sequence, read N- to C-terminus: uncharacterized protein (285 aa).

The first 25 residues, 1–25 (MVKKWLIQFAVMLSVLSTFTYSASA), serve as a signal peptide directing secretion.

This is an uncharacterized protein from Bacillus subtilis (strain 168).